The following is a 161-amino-acid chain: uncharacterized protein (161 aa).

A helical membrane pass occupies residues 16 to 36 (KLGLVVAIFFFMMGTTVVVLY).

It localises to the membrane. This is an uncharacterized protein from Encephalitozoon cuniculi (strain GB-M1) (Microsporidian parasite).